We begin with the raw amino-acid sequence, 214 residues long: Adenylate kinase (214 aa).

ATP is bound at residue 10–15 (GAGKGT). The interval 30–59 (STGDMLRAAVKAGTPLGLEAKKVMDAGQLV) is NMP. AMP-binding positions include Thr-31, Arg-36, 57–59 (QLV), 85–88 (GFPR), and Gln-92. Residues 122–159 (GRRVHSGSGRVYHVVFNPPKVEGKDDVTGEDLSIRPDD) are LID. Residues Arg-123 and 132 to 133 (VY) contribute to the ATP site. Residues Arg-156 and Arg-167 each coordinate AMP. Gln-200 serves as a coordination point for ATP.

This sequence belongs to the adenylate kinase family. In terms of assembly, monomer.

It localises to the cytoplasm. The enzyme catalyses AMP + ATP = 2 ADP. Its pathway is purine metabolism; AMP biosynthesis via salvage pathway; AMP from ADP: step 1/1. Functionally, catalyzes the reversible transfer of the terminal phosphate group between ATP and AMP. Plays an important role in cellular energy homeostasis and in adenine nucleotide metabolism. In Shewanella denitrificans (strain OS217 / ATCC BAA-1090 / DSM 15013), this protein is Adenylate kinase.